A 163-amino-acid polypeptide reads, in one-letter code: NADH-quinone oxidoreductase subunit B (163 aa).

Residues C32, C33, C98, and C127 each coordinate [4Fe-4S] cluster.

Belongs to the complex I 20 kDa subunit family. In terms of assembly, NDH-1 is composed of 14 different subunits. Subunits NuoB, C, D, E, F, and G constitute the peripheral sector of the complex. Requires [4Fe-4S] cluster as cofactor.

It localises to the cell inner membrane. The enzyme catalyses a quinone + NADH + 5 H(+)(in) = a quinol + NAD(+) + 4 H(+)(out). In terms of biological role, NDH-1 shuttles electrons from NADH, via FMN and iron-sulfur (Fe-S) centers, to quinones in the respiratory chain. Couples the redox reaction to proton translocation (for every two electrons transferred, four hydrogen ions are translocated across the cytoplasmic membrane), and thus conserves the redox energy in a proton gradient. This chain is NADH-quinone oxidoreductase subunit B, found in Pelobacter propionicus (strain DSM 2379 / NBRC 103807 / OttBd1).